A 1083-amino-acid polypeptide reads, in one-letter code: MGFLFSINRKLKMPRDGNEGMFTIPGFSQIQFEGFCRFIDQGLMEEFHKFPKIEDTDQEIEFQLFVERYQLVEPLIKERDAVYESLTYSSELYVPAGLIWKTGRDMQEQTIFIGNIPLMNSLGTFIVNGIYRIVINQILQSPGIYYRSELDHNGISVYTSTIISDWGGRSELEIDRKSRIWARVSRKQKISILVLSSAMGSNLREILDNVCYPEIFLSFLNDREKKKIGSKENAILEFYQQFACVGGDPVFSESLCKELQKKFFQQRCELGRIGRRNMNRRLNLDIPQSNTFLLPRDVLAAADHLIGMKFGMGTLDDMNHLKNKRIRSVADLLQDQFGLALVRLENAVRGTICGAIRHKLILTPQNLVSSTSLTTTYESFFGLHPLSQVLDRTNPLTQIVHGRKLSYLGPGGLTGRTASFRIRDIHPSHYGRICPIDTSEGINVGLIGSLAIHARIGHWGSIESPFYEVYQRSKETKMVFLSPSRDEYYTVATGNSLALNRGGIQEEQIVPARYRQEFLTIAWEQIHLRSIFPFQYFSIGASLIPFIEHNDANRALMSSNMQRQAVPLSRSEKCIVGTGLERQAALDSGVSAIAECEGKIIHTDTHKIVLSGHGDTISIPLVMYQRSNKNTCMHQNPQVRRGKCIKKGQILADGAATVGGELALGKNVLVAYMPWEGYNFEDAVLISERLVYEDIYTSFHIRKYEIQTHVTSQGPERITHEIPHLEAHLLRNLDRNGIVALGSWVETGDILVGKLTPQTANESSYAPEDRLLRAILGIQVSTAKETCLKLPIGGRGRVIDVRWIQKKGGSSYNPETIRVYISQKREIKVGDKVAGRHGNKGIISKILSRQDMPYLQDGTPVDMVFNPLGVPSRMNVGQIFECSLGLAGDLLDRHYRIAPFDERYEQEASRKLVFSELYEASKQTANPWVFEPEYPGKSRIFDGRTGDPFEQPVLIGKSYILKLIHQVDDKIHGRSSGHYALVTQQPLRGRAKQGGQRVGEMEVWALEGFGVAHILQEMLTYKSDHIRARQEVLGTTIIGGTIPTPEDAPESFRLLVRELRSLALELNHFLVSEKNFQINRKEA.

This sequence belongs to the RNA polymerase beta chain family. As to quaternary structure, in plastids the minimal PEP RNA polymerase catalytic core is composed of four subunits: alpha, beta, beta', and beta''. When a (nuclear-encoded) sigma factor is associated with the core the holoenzyme is formed, which can initiate transcription.

It localises to the plastid. The protein resides in the chloroplast. The catalysed reaction is RNA(n) + a ribonucleoside 5'-triphosphate = RNA(n+1) + diphosphate. DNA-dependent RNA polymerase catalyzes the transcription of DNA into RNA using the four ribonucleoside triphosphates as substrates. This is DNA-directed RNA polymerase subunit beta from Acorus calamus var. americanus (American sweet flag).